The chain runs to 293 residues: ELMO domain-containing protein 2 (293 aa).

In terms of domain architecture, ELMO spans 126-282; the sequence is QHEKLLIKLW…KFHEKIKGLL (157 aa).

Acts as a GTPase-activating protein (GAP) toward guanine nucleotide exchange factors like ARL2, ARL3, ARF1 and ARF6, but not for GTPases outside the Arf family. This is ELMO domain-containing protein 2 (ELMOD2) from Bos taurus (Bovine).